Here is a 329-residue protein sequence, read N- to C-terminus: GTPase Obg (329 aa).

In terms of domain architecture, Obg spans Met-1 to Leu-159. Residues Ser-160–Gln-327 form the OBG-type G domain. GTP contacts are provided by residues Gly-166 to Ser-173, Phe-191 to Thr-195, Asp-212 to Gly-215, Thr-279 to Asp-282, and Ser-308 to Tyr-310. Positions 173 and 193 each coordinate Mg(2+).

Belongs to the TRAFAC class OBG-HflX-like GTPase superfamily. OBG GTPase family. As to quaternary structure, monomer. Requires Mg(2+) as cofactor.

It is found in the cytoplasm. In terms of biological role, an essential GTPase which binds GTP, GDP and possibly (p)ppGpp with moderate affinity, with high nucleotide exchange rates and a fairly low GTP hydrolysis rate. Plays a role in control of the cell cycle, stress response, ribosome biogenesis and in those bacteria that undergo differentiation, in morphogenesis control. This chain is GTPase Obg, found in Orientia tsutsugamushi (strain Boryong) (Rickettsia tsutsugamushi).